A 246-amino-acid chain; its full sequence is Transcription factor MYB13 (246 aa).

HTH myb-type domains follow at residues 9–61 and 62–116; these read KIGL…INYL and RPDI…KKRL. DNA-binding regions (H-T-H motif) lie at residues 37–61 and 89–112; these read WRAL…INYL and WSAI…HTHL.

In terms of tissue distribution, expressed in roots and flowers. Expressed in shoot apex, axillary buds, at the basis of flowers and branching points of inflorescences.

It is found in the nucleus. In terms of biological role, plays a regulatory role in meristem function. Functions as component of a regulatory network controlling the establishment and/or development of the shoot system by the regulation of apical meristem function. May play a role in tolerance to boric acid. The chain is Transcription factor MYB13 from Arabidopsis thaliana (Mouse-ear cress).